We begin with the raw amino-acid sequence, 378 residues long: Nitronate monooxygenase (378 aa).

A propeptide spanning residues 1–15 (MHFPGHSSKKEESAQ) is cleaved from the precursor. 37 to 39 (PMY) is a binding site for FMN. His-196 acts as the Proton acceptor in catalysis. Position 196 (His-196) interacts with substrate. FMN contacts are provided by residues 229–231 (AGG) and 252–253 (GT).

This sequence belongs to the nitronate monooxygenase family. NMO class II subfamily. In terms of assembly, homodimer. FMN serves as cofactor.

The catalysed reaction is ethylnitronate + O2 = chemical entity + acetaldehyde + nitrite + H(+). Functionally, catalyzes the oxidation of alkyl nitronates to produce the corresponding carbonyl compounds and nitrites. Anionic forms of nitroalkanes are much better substrates than are neutral forms. The protein is Nitronate monooxygenase (ncd-2) of Neurospora crassa (strain ATCC 24698 / 74-OR23-1A / CBS 708.71 / DSM 1257 / FGSC 987).